A 65-amino-acid polypeptide reads, in one-letter code: Seminal plasma acrosin inhibitor A1 (65 aa).

One can recognise a Kazal-like domain in the interval 1–59 (TRKQPNCNVYRSHLFFCTRQMDPICGTNGKSYANPCIFCSEKGLRNQKFDFGHWGHCRE). Cystine bridges form between Cys7-Cys39, Cys17-Cys36, and Cys25-Cys57. Ser12 carries O-linked (GalNAc...) serine glycosylation. Ser62 carries O-linked (GalNAc...) serine glycosylation.

The identity of the O-linked saccharides are not reported in Ref.1. The O-linked polysaccharides on Ser-12 and Ser-62 are probably the mucin type linked to GalNAc. Seminal plasma.

It localises to the secreted. Functionally, inhibits acrosin. This chain is Seminal plasma acrosin inhibitor A1, found in Sus scrofa (Pig).